Here is a 444-residue protein sequence, read N- to C-terminus: MKHFEANFDGLVGPTHNYAGLSFGNVASLSNAALVSNPKAAAKQGLQKAKALADMGIVQGMLAPQERPDLYTLRRIGFSGSDANVLKQAAKEAPILLNACCSASSMWTANAATVSPSADTRDGKLHFTPANLVDKLHRSIEPLTTGRILTATFNDPHYFHHHSHLPEHNSFGDEGAANHTRLCKEYGHAGVELFVYGQEATNPNAPKPQKYPARQTLEASMAVARLHQLEDDNCVFIQQNPDVIDQGVFHNDVIAVGNQNVLFYHEQAFLNTQQKIDEIKRKLDTELYFIEVPTAKVTIQDAVKSYLFNTQIITLASGEMAIIAPTDCQENPAVLAYLNELLTLNTPIKQVLYFDVKQSMQNGGGPACLRLRVAMNEKEITAVNQHTLLNDALFNRLNTWIEKHYRDRLTTQDLADPQLIIESRTALDELSQIMKLGSVYQFQK.

Substrate is bound by residues 19–28, asparagine 110, and 137–138; these read AGLSFGNVAS and HR. Glutamate 174 is an active-site residue. Arginine 214 is a binding site for substrate. Residue histidine 250 is part of the active site. The substrate site is built by aspartate 252 and asparagine 362. Catalysis depends on cysteine 368, which acts as the Nucleophile.

The protein belongs to the succinylarginine dihydrolase family. Homodimer.

It carries out the reaction N(2)-succinyl-L-arginine + 2 H2O + 2 H(+) = N(2)-succinyl-L-ornithine + 2 NH4(+) + CO2. The protein operates within amino-acid degradation; L-arginine degradation via AST pathway; L-glutamate and succinate from L-arginine: step 2/5. Its function is as follows. Catalyzes the hydrolysis of N(2)-succinylarginine into N(2)-succinylornithine, ammonia and CO(2). The sequence is that of N-succinylarginine dihydrolase from Shewanella putrefaciens (strain CN-32 / ATCC BAA-453).